The primary structure comprises 391 residues: MADEGSSTKDSESFSVLNWDQVSRLHEVLTEVVPIHGRGNFPTLEITLKDIVQTVRSRLEEAGIKVQDVRLNGSAAGHVLVKDNGLGCKDLDLIFHVALPTEAEFQLVRDVVLCSLLNFLPEGVNKLKISPVTLKEAYVQKLVKVCTDTDRWSLISLSNKNGRNVELKFVDSIRRQFEFSVDSFQIILDSLLFFYDCSSNPVSEHFHPTVVGESMYGDFEEAFDHLQNRLIATKNPEEIRGGGLLKYSNLLVRDFRPADQEEIKTLERYMCSRFFIDFPDILEQQRKLETYLQNHFADEERSKYDYLMILRRVVNESTVCLMGHERRQTLNLISLLALRVLAEQNIIPSATNVTCYYQPAPYVSDGNFNNYYIAHPPVTYSQPYPTWLPCN.

Belongs to the TENT family. In terms of assembly, interacts with BCCIP and PABPC1; the interaction has no effect on TENT5C poly(A) polymerase function. Interacts with PLK4; this interaction leads to the TENT5C recruitment into the centrosome.

It is found in the nucleus. The protein resides in the cytoplasm. The protein localises to the cytoskeleton. Its subcellular location is the microtubule organizing center. It localises to the centrosome. The enzyme catalyses RNA(n) + ATP = RNA(n)-3'-adenine ribonucleotide + diphosphate. Catalyzes the transfer of one adenosine molecule from an ATP to an mRNA poly(A) tail bearing a 3'-OH terminal group and enhances mRNA stability and gene expression. Can also elongate RNA oligos ending with uridine molecule, provided that the sequence is adenosine-rich. Mainly targets mRNAs encoding endoplasmic reticulum-targeted protein. In Rattus norvegicus (Rat), this protein is Terminal nucleotidyltransferase 5C.